The chain runs to 323 residues: MIEFGNFYQLIAKNHLSHWLEILPAQIAAWQREQQHGLFKQWSNAVEFLPEITPWRLDLLHSVTAESEAPLSEGQLKRIDTLLRNLMPWRKGPFSLYGVNIDTEWRSDWKWERVLPHLSDLTGRTILDVGCGSGYHLWRMIGAGAHLAVGIDPTQLFLCQFEAVRKLLGNDQRAHLLPLGIEQLPALKAFDTVFSMGVLYHRRSPLEHLWQLKDQLVNEGELVLETLVVDGDENTVLVPGDRYAQMRNVYFIPSAPALKKWLEKCGLIDVRIADVCVTTTEEQRRTEWMVTESLADFLDPNDHSKTVEGYPAPLRAVLIARKP.

Carboxy-S-adenosyl-L-methionine-binding positions include lysine 91, tryptophan 105, lysine 110, glycine 130, 152-154, 181-182, methionine 196, tyrosine 200, and arginine 315; these read DPT and IE.

This sequence belongs to the class I-like SAM-binding methyltransferase superfamily. CmoB family. In terms of assembly, homotetramer.

It catalyses the reaction carboxy-S-adenosyl-L-methionine + 5-hydroxyuridine(34) in tRNA = 5-carboxymethoxyuridine(34) in tRNA + S-adenosyl-L-homocysteine + H(+). Functionally, catalyzes carboxymethyl transfer from carboxy-S-adenosyl-L-methionine (Cx-SAM) to 5-hydroxyuridine (ho5U) to form 5-carboxymethoxyuridine (cmo5U) at position 34 in tRNAs. This chain is tRNA U34 carboxymethyltransferase, found in Salmonella arizonae (strain ATCC BAA-731 / CDC346-86 / RSK2980).